The chain runs to 115 residues: NAD(P)H-quinone oxidoreductase subunit M (115 aa).

The protein belongs to the complex I NdhM subunit family. As to quaternary structure, NDH-1 can be composed of about 15 different subunits; different subcomplexes with different compositions have been identified which probably have different functions.

It localises to the cellular thylakoid membrane. It carries out the reaction a plastoquinone + NADH + (n+1) H(+)(in) = a plastoquinol + NAD(+) + n H(+)(out). It catalyses the reaction a plastoquinone + NADPH + (n+1) H(+)(in) = a plastoquinol + NADP(+) + n H(+)(out). Its function is as follows. NDH-1 shuttles electrons from an unknown electron donor, via FMN and iron-sulfur (Fe-S) centers, to quinones in the respiratory and/or the photosynthetic chain. The immediate electron acceptor for the enzyme in this species is believed to be plastoquinone. Couples the redox reaction to proton translocation, and thus conserves the redox energy in a proton gradient. Cyanobacterial NDH-1 also plays a role in inorganic carbon-concentration. The chain is NAD(P)H-quinone oxidoreductase subunit M from Trichodesmium erythraeum (strain IMS101).